The sequence spans 602 residues: Elongation factor 4 (602 aa).

The region spanning 5–187 (DHIRNFSIIA…ALVKRIPAPK (183 aa)) is the tr-type G domain. Residues 17–22 (DHGKST) and 134–137 (NKID) each bind GTP.

The protein belongs to the TRAFAC class translation factor GTPase superfamily. Classic translation factor GTPase family. LepA subfamily.

It localises to the cell inner membrane. The enzyme catalyses GTP + H2O = GDP + phosphate + H(+). Functionally, required for accurate and efficient protein synthesis under certain stress conditions. May act as a fidelity factor of the translation reaction, by catalyzing a one-codon backward translocation of tRNAs on improperly translocated ribosomes. Back-translocation proceeds from a post-translocation (POST) complex to a pre-translocation (PRE) complex, thus giving elongation factor G a second chance to translocate the tRNAs correctly. Binds to ribosomes in a GTP-dependent manner. The protein is Elongation factor 4 of Zymomonas mobilis subsp. mobilis (strain ATCC 31821 / ZM4 / CP4).